The primary structure comprises 90 residues: [Phe8]-phyllolitorin (90 aa).

The N-terminal stretch at 1-30 (MSAVPFTRVLLISGFLAHLLLSTFVTLTVC) is a signal peptide. Residues 31–48 (KEVTEESDDLSKRNVLQR) constitute a propeptide that is removed on maturation. Pyrrolidone carboxylic acid is present on Q49. M57 carries the methionine amide modification. A propeptide spanning residues 61-90 (SLENTNRRSDEDMEISALFRGSPLKVKRSD) is cleaved from the precursor.

This sequence belongs to the bombesin/neuromedin-B/ranatensin family. Expressed by the skin glands.

The protein resides in the secreted. The chain is [Phe8]-phyllolitorin from Phyllomedusa sauvagei (Sauvage's leaf frog).